Reading from the N-terminus, the 202-residue chain is FMN-dependent NADH:quinone oxidoreductase (202 aa).

Residues S12 and 21–23 (SFS) each bind FMN.

It belongs to the azoreductase type 1 family. As to quaternary structure, homodimer. FMN serves as cofactor.

It carries out the reaction 2 a quinone + NADH + H(+) = 2 a 1,4-benzosemiquinone + NAD(+). It catalyses the reaction N,N-dimethyl-1,4-phenylenediamine + anthranilate + 2 NAD(+) = 2-(4-dimethylaminophenyl)diazenylbenzoate + 2 NADH + 2 H(+). Functionally, quinone reductase that provides resistance to thiol-specific stress caused by electrophilic quinones. Also exhibits azoreductase activity. Catalyzes the reductive cleavage of the azo bond in aromatic azo compounds to the corresponding amines. This is FMN-dependent NADH:quinone oxidoreductase from Mycoplasma mobile (strain ATCC 43663 / 163K / NCTC 11711) (Mesomycoplasma mobile).